Reading from the N-terminus, the 305-residue chain is Oligopeptide transport system permease protein OppC (305 aa).

6 helical membrane-spanning segments follow: residues 43-63 (AMVG…APMF), 105-125 (ISIF…VIWG), 166-185 (LFTI…ARIV), 212-232 (LFKH…TLTV), 236-256 (IFTE…LASW), and 274-294 (LFFP…VGDG). One can recognise an ABC transmembrane type-1 domain in the interval 103-292 (ARISIFIGVA…ITMFGFNVVG (190 aa)).

This sequence belongs to the binding-protein-dependent transport system permease family. OppBC subfamily. As to quaternary structure, the complex is composed of two ATP-binding proteins (OppD and OppF), two transmembrane proteins (OppB and OppC) and a solute-binding protein (OppA).

It is found in the cell membrane. Its function is as follows. Part of the ABC transporter complex OppABCDF involved in the uptake of oligopeptides. Probably responsible for the translocation of the substrate across the membrane. Required for sporulation and genetic competence. The protein is Oligopeptide transport system permease protein OppC of Bacillus subtilis (strain 168).